We begin with the raw amino-acid sequence, 200 residues long: Octanoyltransferase (200 aa).

A BPL/LPL catalytic domain is found at Gly27–Arg200. Substrate is bound by residues Arg66–His73, Ser134–Gly136, and Gly147–Ala149. Cys165 functions as the Acyl-thioester intermediate in the catalytic mechanism.

This sequence belongs to the LipB family.

Its subcellular location is the cytoplasm. The catalysed reaction is octanoyl-[ACP] + L-lysyl-[protein] = N(6)-octanoyl-L-lysyl-[protein] + holo-[ACP] + H(+). It functions in the pathway protein modification; protein lipoylation via endogenous pathway; protein N(6)-(lipoyl)lysine from octanoyl-[acyl-carrier-protein]: step 1/2. In terms of biological role, catalyzes the transfer of endogenously produced octanoic acid from octanoyl-acyl-carrier-protein onto the lipoyl domains of lipoate-dependent enzymes. Lipoyl-ACP can also act as a substrate although octanoyl-ACP is likely to be the physiological substrate. The chain is Octanoyltransferase from Dichelobacter nodosus (strain VCS1703A).